The primary structure comprises 638 residues: Threonine--tRNA ligase (638 aa).

The TGS domain maps to 1–61 (MVAITLPDGK…DRDVNLSIIT (61 aa)). Residues 244-536 (DHRRLGREME…LIENFAGRFP (293 aa)) form a catalytic region. Zn(2+)-binding residues include cysteine 336, histidine 387, and histidine 513.

Belongs to the class-II aminoacyl-tRNA synthetase family. In terms of assembly, homodimer. Zn(2+) serves as cofactor.

The protein localises to the cytoplasm. It carries out the reaction tRNA(Thr) + L-threonine + ATP = L-threonyl-tRNA(Thr) + AMP + diphosphate + H(+). Catalyzes the attachment of threonine to tRNA(Thr) in a two-step reaction: L-threonine is first activated by ATP to form Thr-AMP and then transferred to the acceptor end of tRNA(Thr). Also edits incorrectly charged L-seryl-tRNA(Thr). This is Threonine--tRNA ligase from Paramagnetospirillum magneticum (strain ATCC 700264 / AMB-1) (Magnetospirillum magneticum).